We begin with the raw amino-acid sequence, 365 residues long: MSSSFGKIFRVSTFGESHGGAVGVILDGCPPKLKIDINLIQNELDRRRPGQSDITTPRNEEDKIEILSGIKEGLTLGTPIAMLVRNKDQRPADYNNMEQVFRPSHADGTYHLKYGIQASSGGGRASARETIGRVAAGAVAKQLLKTFCNTEILSWVKRIHDIDSDINKEKISLKKIDSNIVRCPDEKVSTEMIERIKELKRQGDSCGGVIECLVRNVPSGLGMPVFDKLEADLAKALMSLPATKGFEIGSGFSGTYLKGSEHNDSFIKSDDSSKLRTTSNNSGGIQGGISNGENIEMKIAFKPTATIGKEQKTVNAEGKEVLMKAKGRHDPCVLPRAVPMVDAMVALVLADHLLLNHAQCDLINN.

Arginine 47 is an NADP(+) binding site. FMN is bound by residues 124–126, glycine 287, 302–306, and arginine 328; these read RAS and KPTAT. The tract at residues 266 to 290 is disordered; sequence FIKSDDSSKLRTTSNNSGGIQGGIS.

Belongs to the chorismate synthase family. As to quaternary structure, homotetramer. Requires FMNH2 as cofactor.

The enzyme catalyses 5-O-(1-carboxyvinyl)-3-phosphoshikimate = chorismate + phosphate. Its pathway is metabolic intermediate biosynthesis; chorismate biosynthesis; chorismate from D-erythrose 4-phosphate and phosphoenolpyruvate: step 7/7. Functionally, catalyzes the anti-1,4-elimination of the C-3 phosphate and the C-6 proR hydrogen from 5-enolpyruvylshikimate-3-phosphate (EPSP) to yield chorismate, which is the branch point compound that serves as the starting substrate for the three terminal pathways of aromatic amino acid biosynthesis. This reaction introduces a second double bond into the aromatic ring system. This is Chorismate synthase from Prochlorococcus marinus (strain MIT 9301).